The chain runs to 689 residues: Glycine--tRNA ligase beta subunit (689 aa).

The protein belongs to the class-II aminoacyl-tRNA synthetase family. As to quaternary structure, tetramer of two alpha and two beta subunits.

It is found in the cytoplasm. It carries out the reaction tRNA(Gly) + glycine + ATP = glycyl-tRNA(Gly) + AMP + diphosphate. This chain is Glycine--tRNA ligase beta subunit, found in Enterobacter sp. (strain 638).